A 228-amino-acid chain; its full sequence is Urease accessory protein UreF (228 aa).

Belongs to the UreF family. In terms of assembly, ureD, UreF and UreG form a complex that acts as a GTP-hydrolysis-dependent molecular chaperone, activating the urease apoprotein by helping to assemble the nickel containing metallocenter of UreC. The UreE protein probably delivers the nickel.

The protein localises to the cytoplasm. Required for maturation of urease via the functional incorporation of the urease nickel metallocenter. The polypeptide is Urease accessory protein UreF (Prochlorococcus marinus (strain MIT 9301)).